Consider the following 183-residue polypeptide: Holliday junction branch migration complex subunit RuvA (183 aa).

The interval 1-64 (MIVAIEGIVS…EDSHKLYGFL (64 aa)) is domain I. The domain II stretch occupies residues 65–138 (DTNEQRMFEL…SDAKINIENS (74 aa)). Serine 138 is a region of interest (flexible linker). Residues 138–183 (SNQDHAQALAALLSLGFKQENILKVLRTCESQNTSELIKEALKKLA) form a domain III region.

It belongs to the RuvA family. As to quaternary structure, homotetramer. Forms an RuvA(8)-RuvB(12)-Holliday junction (HJ) complex. HJ DNA is sandwiched between 2 RuvA tetramers; dsDNA enters through RuvA and exits via RuvB. An RuvB hexamer assembles on each DNA strand where it exits the tetramer. Each RuvB hexamer is contacted by two RuvA subunits (via domain III) on 2 adjacent RuvB subunits; this complex drives branch migration. In the full resolvosome a probable DNA-RuvA(4)-RuvB(12)-RuvC(2) complex forms which resolves the HJ.

Its subcellular location is the cytoplasm. Its function is as follows. The RuvA-RuvB-RuvC complex processes Holliday junction (HJ) DNA during genetic recombination and DNA repair, while the RuvA-RuvB complex plays an important role in the rescue of blocked DNA replication forks via replication fork reversal (RFR). RuvA specifically binds to HJ cruciform DNA, conferring on it an open structure. The RuvB hexamer acts as an ATP-dependent pump, pulling dsDNA into and through the RuvAB complex. HJ branch migration allows RuvC to scan DNA until it finds its consensus sequence, where it cleaves and resolves the cruciform DNA. The sequence is that of Holliday junction branch migration complex subunit RuvA from Campylobacter lari (strain RM2100 / D67 / ATCC BAA-1060).